Here is a 195-residue protein sequence, read N- to C-terminus: GTP cyclohydrolase 1 (195 aa).

Residues cysteine 86, histidine 89, and cysteine 158 each coordinate Zn(2+).

This sequence belongs to the GTP cyclohydrolase I family. As to quaternary structure, homomer.

It catalyses the reaction GTP + H2O = 7,8-dihydroneopterin 3'-triphosphate + formate + H(+). The protein operates within cofactor biosynthesis; 7,8-dihydroneopterin triphosphate biosynthesis; 7,8-dihydroneopterin triphosphate from GTP: step 1/1. This chain is GTP cyclohydrolase 1, found in Ruminiclostridium cellulolyticum (strain ATCC 35319 / DSM 5812 / JCM 6584 / H10) (Clostridium cellulolyticum).